A 110-amino-acid polypeptide reads, in one-letter code: uncharacterized protein (110 aa).

A run of 3 helical transmembrane segments spans residues 32–52, 57–77, and 90–110; these read VLNV…ALVP, YTHM…CICI, and FLAS…TFVI.

It is found in the membrane. Its function is as follows. May play a role in proper chromosome segregation. Suppresses the high-frequency loss of mini-chromosomes when overexpressed, and this suppression is completely dependent on silencing protein SIR4. This is an uncharacterized protein from Saccharomyces cerevisiae (strain ATCC 204508 / S288c) (Baker's yeast).